The following is a 594-amino-acid chain: uncharacterized protein (594 aa).

Its function is as follows. The presence of the two linear plasmids, termed pGKL1 and pGKL2, in strains of Kluyveromyces lactis confers the killer phenotype to the host cell, by promoting the secretion of a toxin able to inhibit the growth of sensitive strains. This is an uncharacterized protein from Kluyveromyces lactis (strain ATCC 8585 / CBS 2359 / DSM 70799 / NBRC 1267 / NRRL Y-1140 / WM37) (Yeast).